Consider the following 261-residue polypeptide: Imidazole glycerol phosphate synthase subunit HisF (261 aa).

Residues Asp-12 and Asp-131 contribute to the active site.

Belongs to the HisA/HisF family. Heterodimer of HisH and HisF.

Its subcellular location is the cytoplasm. The catalysed reaction is 5-[(5-phospho-1-deoxy-D-ribulos-1-ylimino)methylamino]-1-(5-phospho-beta-D-ribosyl)imidazole-4-carboxamide + L-glutamine = D-erythro-1-(imidazol-4-yl)glycerol 3-phosphate + 5-amino-1-(5-phospho-beta-D-ribosyl)imidazole-4-carboxamide + L-glutamate + H(+). It functions in the pathway amino-acid biosynthesis; L-histidine biosynthesis; L-histidine from 5-phospho-alpha-D-ribose 1-diphosphate: step 5/9. Its function is as follows. IGPS catalyzes the conversion of PRFAR and glutamine to IGP, AICAR and glutamate. The HisF subunit catalyzes the cyclization activity that produces IGP and AICAR from PRFAR using the ammonia provided by the HisH subunit. This chain is Imidazole glycerol phosphate synthase subunit HisF, found in Brucella anthropi (strain ATCC 49188 / DSM 6882 / CCUG 24695 / JCM 21032 / LMG 3331 / NBRC 15819 / NCTC 12168 / Alc 37) (Ochrobactrum anthropi).